The following is a 256-amino-acid chain: NAD-dependent protein deacylase 4 (256 aa).

Residues Met1 to Gly250 enclose the Deacetylase sirtuin-type domain. Gly19–Trp39 contributes to the NAD(+) binding site. Substrate-binding residues include Tyr64 and Arg67. Gln98–Asp101 is a binding site for NAD(+). His116 serves as the catalytic Proton acceptor. Zn(2+) is bound by residues Cys124, Cys127, Cys152, and Cys155. NAD(+) is bound by residues Gly192–Ser194, Asn218–Val220, and Ala236.

It belongs to the sirtuin family. Class III subfamily. Zn(2+) is required as a cofactor.

The protein localises to the cytoplasm. It catalyses the reaction N(6)-acetyl-L-lysyl-[protein] + NAD(+) + H2O = 2''-O-acetyl-ADP-D-ribose + nicotinamide + L-lysyl-[protein]. It carries out the reaction N(6)-succinyl-L-lysyl-[protein] + NAD(+) + H2O = 2''-O-succinyl-ADP-D-ribose + nicotinamide + L-lysyl-[protein]. In terms of biological role, NAD-dependent lysine deacetylase and desuccinylase that specifically removes acetyl and succinyl groups on target proteins. Modulates the activities of several proteins which are inactive in their acylated form. The sequence is that of NAD-dependent protein deacylase 4 from Pseudomonas syringae pv. tomato (strain ATCC BAA-871 / DC3000).